The chain runs to 227 residues: Cytidylate kinase (227 aa).

Position 12-20 (12-20) interacts with ATP; that stretch reads GPSGAGKGT.

Belongs to the cytidylate kinase family. Type 1 subfamily.

Its subcellular location is the cytoplasm. The catalysed reaction is CMP + ATP = CDP + ADP. It catalyses the reaction dCMP + ATP = dCDP + ADP. This is Cytidylate kinase from Xanthomonas oryzae pv. oryzae (strain PXO99A).